A 174-amino-acid chain; its full sequence is MESQVRQNFHKDCEAAINRQINLELYASYSYLSMAYYFDRDDVALPGFAHFFKQQSEEEREHAEKLLKFQNQRGGRIFLQDVKKPDRDEWGSGLDALECALQLEKNVNQSLLDLHKVCSEHNDPHMCDFLETHYLDEQVKSIKELGDWVTNLRRLGAPQNGMAEYLFDKHTLGK.

Residues 7–156 (QNFHKDCEAA…DWVTNLRRLG (150 aa)) form the Ferritin-like diiron domain. Fe cation is bound by residues Glu-24, Glu-59, His-62, Glu-104, and Gln-138.

The protein belongs to the ferritin family. In liver, forms a heteromer consisting of middle and heavy subunits. The functional molecule forms a roughly spherical shell with a diameter of 12 nm and contains a central cavity into which the insoluble mineral iron core is deposited. As to expression, liver (at protein level).

The enzyme catalyses 4 Fe(2+) + O2 + 4 H(+) = 4 Fe(3+) + 2 H2O. Functionally, stores iron in a soluble, non-toxic, readily available form. Important for iron homeostasis. Has ferroxidase activity. Iron is taken up in the ferrous form and deposited as ferric hydroxides after oxidation. Also plays a role in delivery of iron to cells. Mediates iron uptake in capsule cells of the developing kidney. Delivery to lysosomes is mediated by the cargo receptor NCOA4 for autophagic degradation and release of iron. The protein is Ferritin, heavy subunit of Trematomus bernacchii (Emerald rockcod).